Consider the following 397-residue polypeptide: Tryptophan synthase beta chain (397 aa).

Lys-91 is subject to N6-(pyridoxal phosphate)lysine.

The protein belongs to the TrpB family. In terms of assembly, tetramer of two alpha and two beta chains. Pyridoxal 5'-phosphate serves as cofactor.

It carries out the reaction (1S,2R)-1-C-(indol-3-yl)glycerol 3-phosphate + L-serine = D-glyceraldehyde 3-phosphate + L-tryptophan + H2O. The protein operates within amino-acid biosynthesis; L-tryptophan biosynthesis; L-tryptophan from chorismate: step 5/5. Its function is as follows. The beta subunit is responsible for the synthesis of L-tryptophan from indole and L-serine. The sequence is that of Tryptophan synthase beta chain from Bacillus cereus (strain AH187).